The sequence spans 531 residues: Serine-type carboxypeptidase F (531 aa).

The N-terminal stretch at Met1–Lys25 is a signal peptide. Residue Asn20 is glycosylated (N-linked (GlcNAc...) asparagine). Positions His26–Lys52 are excised as a propeptide. Asn63, Asn94, and Asn155 each carry an N-linked (GlcNAc...) asparagine glycan. Residue Ser211 is part of the active site. 4 N-linked (GlcNAc...) asparagine glycosylation sites follow: Asn228, Asn271, Asn309, and Asn378. Asp430 is an active-site residue. Residues Asn436 and Asn444 are each glycosylated (N-linked (GlcNAc...) asparagine). His507 is an active-site residue.

It belongs to the peptidase S10 family. As to quaternary structure, monomer.

Its activity is regulated as follows. Inhibited by DFP, and Hg(Cl)2. Removes any amino acid from the C-terminus of a long peptide. Digests preferentially peptides containing a positively charged residue in P1' position, as well as arginine, lysine or phenylalanine in P1 position of ester substrate. Also catalyzes peptide synthesis. The polypeptide is Serine-type carboxypeptidase F (pepF) (Aspergillus niger).